The chain runs to 976 residues: Vacuolar membrane protease (976 aa).

Topologically, residues Met1 to Lys15 are cytoplasmic. A helical transmembrane segment spans residues Thr16–Asp36. Topologically, residues His37–Leu359 are vacuolar. N-linked (GlcNAc...) asparagine glycosylation is found at Asn96 and Asn121. Residues His156 and Asp168 each contribute to the Zn(2+) site. The N-linked (GlcNAc...) asparagine glycan is linked to Asn189. Glu200 functions as the Proton acceptor in the catalytic mechanism. Glu201 contacts Zn(2+). Asn212 and Asn217 each carry an N-linked (GlcNAc...) asparagine glycan. Residues Glu226 and His300 each coordinate Zn(2+). A helical membrane pass occupies residues Phe360–Ile380. Residues Ser381–Trp392 lie on the Cytoplasmic side of the membrane. The chain crosses the membrane as a helical span at residues Leu393–Phe412. Residues Ser413 to Tyr428 are Vacuolar-facing. The helical transmembrane segment at Phe429–Cys449 threads the bilayer. The Cytoplasmic portion of the chain corresponds to Ser450–Ser461. A helical membrane pass occupies residues Leu462–Leu482. Topologically, residues Tyr483–Ser496 are vacuolar. The chain crosses the membrane as a helical span at residues Ile497–Met517. Topologically, residues Arg518–Tyr627 are cytoplasmic. A disordered region spans residues Arg528–Glu610. Residues Asn549–Thr558 are compositionally biased toward polar residues. Residues Ser559–Asp570 show a composition bias toward low complexity. Positions Asn582–Pro601 are enriched in basic and acidic residues. The chain crosses the membrane as a helical span at residues Ala628–Val648. Residues Asp649–Asp668 lie on the Vacuolar side of the membrane. A glycan (N-linked (GlcNAc...) asparagine) is linked at Asn656. A helical transmembrane segment spans residues Val669–Tyr689. At Lys690–Asn692 the chain is on the cytoplasmic side. Residues Tyr693–Val713 traverse the membrane as a helical segment. The Vacuolar portion of the chain corresponds to His714–Leu976. Asn768, Asn796, Asn811, Asn866, and Asn937 each carry an N-linked (GlcNAc...) asparagine glycan.

It belongs to the peptidase M28 family. Zn(2+) serves as cofactor.

The protein resides in the vacuole membrane. May be involved in vacuolar sorting and osmoregulation. The chain is Vacuolar membrane protease from Saccharomyces cerevisiae (strain AWRI1631) (Baker's yeast).